Consider the following 761-residue polypeptide: Neutral ceramidase (761 aa).

Residues 1 to 11 are Cytoplasmic-facing; the sequence is MAKRTFSSLEA. The helical; Signal-anchor for type II membrane protein transmembrane segment at 12–32 threads the bilayer; that stretch reads FLIFLLVMMTAITVALLTLLF. The Lumenal segment spans residues 33–761; that stretch reads VTSGTIENHK…ISSPFEIVTT (729 aa). Residues 43–76 are disordered; the sequence is DSGNHWVSTTQGPTTTQSSPTTQTPTTQTPDLPP. A compositionally biased stretch (low complexity) spans 50–76; it reads STTQGPTTTQSSPTTQTPTTQTPDLPP. O-linked (GalNAc...) threonine glycosylation is found at threonine 51, threonine 52, threonine 56, threonine 57, and threonine 58. 2 O-linked (GalNAc...) serine glycosylation sites follow: serine 60 and serine 61. Threonine 63, threonine 64, threonine 66, threonine 68, threonine 69, and threonine 71 each carry an O-linked (GalNAc...) threonine glycan. Position 115 (leucine 115) interacts with Ca(2+). Histidine 175 is a Zn(2+) binding site. Asparagine 198 is a glycosylation site (N-linked (GlcNAc...) asparagine). Residue histidine 284 participates in Zn(2+) binding. Residue serine 335 is the Nucleophile of the active site. Cystine bridges form between cysteine 343–cysteine 357 and cysteine 350–cysteine 365. Residues asparagine 412 and asparagine 449 are each glycosylated (N-linked (GlcNAc...) asparagine). Cysteine 429 and cysteine 479 are disulfide-bonded. Zn(2+)-binding residues include glutamate 521 and tyrosine 560. Residues aspartate 693, serine 695, and threonine 698 each contribute to the Ca(2+) site. A required for correct folding and localization region spans residues 751–761; the sequence is GISSPFEIVTT.

It belongs to the neutral ceramidase family. Zn(2+) is required as a cofactor. Post-translationally, proteolytic cleavage of the N-terminus removes the signal-anchor and produces a soluble form of the protein. In terms of processing, N-glycosylated. Required for enzyme activity. O-glycosylated. Required to retain it as a type II membrane protein at the cell surface. Post-translationally, phosphorylated. May prevent ubiquitination and subsequent degradation. In terms of processing, ubiquitinated, leading to its degradation by the proteasome. Ubiquitination is triggered by nitric oxide. Highly expressed in brain, kidney and heart. Expressed at lower level in other tissues such as liver. Expressed in intestine, kidney and liver (at protein level). Localizes in the epithelia of the jejunum and ileum.

Its subcellular location is the cell membrane. The protein resides in the membrane raft. It localises to the membrane. The protein localises to the caveola. It is found in the golgi apparatus membrane. Its subcellular location is the mitochondrion. The protein resides in the secreted. It localises to the extracellular exosome. It catalyses the reaction an N-acylsphing-4-enine + H2O = sphing-4-enine + a fatty acid. It carries out the reaction N-hexadecanoylsphing-4-enine + H2O = sphing-4-enine + hexadecanoate. The enzyme catalyses N-tetradecanoylsphing-4-enine + H2O = tetradecanoate + sphing-4-enine. The catalysed reaction is N-(9Z-octadecenoyl)-sphing-4-enine + H2O = sphing-4-enine + (9Z)-octadecenoate. It catalyses the reaction N-(15Z-tetracosenoyl)-sphing-4-enine + H2O = (15Z)-tetracosenoate + sphing-4-enine. It carries out the reaction N-octanoylsphing-4-enine + H2O = octanoate + sphing-4-enine. The enzyme catalyses N-dodecanoylsphing-4-enine + H2O = dodecanoate + sphing-4-enine. The catalysed reaction is N-(hexanoyl)sphing-4-enine + H2O = hexanoate + sphing-4-enine. It catalyses the reaction N-octadecanoylsphing-4-enine + H2O = sphing-4-enine + octadecanoate. It carries out the reaction sphinganine + hexadecanoate = N-hexadecanoylsphinganine + H2O. The enzyme catalyses N-(octadecanoyl)-sphinganine + H2O = sphinganine + octadecanoate. It participates in lipid metabolism; sphingolipid metabolism. The reverse reaction is inhibited by Zn(2+) and Cu(2+). Inhibited by cardiolipin and phosphatidic acid. Functionally, plasma membrane ceramidase that hydrolyzes sphingolipid ceramides into sphingosine and free fatty acids at neutral pH. Ceramides, sphingosine, and its phosphorylated form sphingosine-1-phosphate are bioactive lipids that mediate cellular signaling pathways regulating several biological processes including cell proliferation, apoptosis and differentiation. Also catalyzes the reverse reaction allowing the synthesis of ceramides from fatty acids and sphingosine. Together with sphingomyelinase, participates in the production of sphingosine and sphingosine-1-phosphate from the degradation of sphingomyelin, a sphingolipid enriched in the plasma membrane of cells. Also participates in the hydrolysis of ceramides from the extracellular milieu allowing the production of sphingosine-1-phosphate inside and outside cells. This is the case for instance with the digestion of dietary sphingolipids in the intestinal tract. The chain is Neutral ceramidase (Asah2) from Rattus norvegicus (Rat).